Reading from the N-terminus, the 452-residue chain is Pup--protein ligase (452 aa).

Residue glutamate 9 coordinates Mg(2+). Arginine 53 is an ATP binding site. Residue tyrosine 55 coordinates Mg(2+). Aspartate 57 serves as the catalytic Proton acceptor. Glutamate 63 lines the Mg(2+) pocket. 2 residues coordinate ATP: threonine 66 and tryptophan 419.

This sequence belongs to the Pup ligase/Pup deamidase family. Pup-conjugating enzyme subfamily.

It carries out the reaction ATP + [prokaryotic ubiquitin-like protein]-L-glutamate + [protein]-L-lysine = ADP + phosphate + N(6)-([prokaryotic ubiquitin-like protein]-gamma-L-glutamyl)-[protein]-L-lysine.. It functions in the pathway protein degradation; proteasomal Pup-dependent pathway. It participates in protein modification; protein pupylation. In terms of biological role, catalyzes the covalent attachment of the prokaryotic ubiquitin-like protein modifier Pup to the proteasomal substrate proteins, thereby targeting them for proteasomal degradation. This tagging system is termed pupylation. The ligation reaction involves the side-chain carboxylate of the C-terminal glutamate of Pup and the side-chain amino group of a substrate lysine. This Mycobacterium ulcerans (strain Agy99) protein is Pup--protein ligase.